A 251-amino-acid chain; its full sequence is MTTIGTRKRVAVVTGASSGIGEATARTLAAQGFHVVAVARRADRITALANQIGGTAIVADVTDDAAVEALARALSRVDVLVNNAGGAKGLQFVADADLEHWRWMWDTNVLGTLRVTRALLPKLIDSGDGLIVTVTSIAAIEVYDGGAGYTAAKHAQGALHRTLRGELLGKPVRLTEIAPGAVETEFSLVRFDGDQQRADAVYAGMTPLVAADVAEVIGFVATRPSHVNLDQIVIRPRDQASASRRATHPVR.

12–36 lines the NADP(+) pocket; the sequence is VVTGASSGIGEATARTLAAQGFHVV. Ser-136 lines the substrate pocket. Tyr-149 (proton acceptor) is an active-site residue.

This sequence belongs to the short-chain dehydrogenases/reductases (SDR) family.

This is an uncharacterized protein from Mycobacterium tuberculosis (strain CDC 1551 / Oshkosh).